We begin with the raw amino-acid sequence, 172 residues long: Large ribosomal subunit protein uL10 (172 aa).

This sequence belongs to the universal ribosomal protein uL10 family. In terms of assembly, part of the ribosomal stalk of the 50S ribosomal subunit. The N-terminus interacts with L11 and the large rRNA to form the base of the stalk. The C-terminus forms an elongated spine to which L12 dimers bind in a sequential fashion forming a multimeric L10(L12)X complex.

Its function is as follows. Forms part of the ribosomal stalk, playing a central role in the interaction of the ribosome with GTP-bound translation factors. This is Large ribosomal subunit protein uL10 from Ruegeria pomeroyi (strain ATCC 700808 / DSM 15171 / DSS-3) (Silicibacter pomeroyi).